We begin with the raw amino-acid sequence, 393 residues long: Pyrimidine monooxygenase RutA (393 aa).

Residues 79–80 (IK), Asn-145, Glu-154, 170–171 (RY), and Ser-220 contribute to the FMN site.

Belongs to the NtaA/SnaA/DszA monooxygenase family. RutA subfamily.

The enzyme catalyses uracil + FMNH2 + NADH + O2 = (Z)-3-ureidoacrylate + FMN + NAD(+) + H2O + H(+). The catalysed reaction is thymine + FMNH2 + NADH + O2 = (Z)-2-methylureidoacrylate + FMN + NAD(+) + H2O + H(+). Its function is as follows. Catalyzes the pyrimidine ring opening between N-3 and C-4 by an unusual flavin hydroperoxide-catalyzed mechanism, adding oxygen atoms in the process to yield ureidoacrylate peracid, that immediately reacts with FMN forming ureidoacrylate and FMN-N(5)-oxide. The FMN-N(5)-oxide reacts spontaneously with NADH to produce FMN. Requires the flavin reductase RutF to regenerate FMN in vivo. The polypeptide is Pyrimidine monooxygenase RutA (Escherichia coli O6:H1 (strain CFT073 / ATCC 700928 / UPEC)).